Consider the following 279-residue polypeptide: Pantothenate synthetase (279 aa).

31–38 (MGALHEGH) serves as a coordination point for ATP. His-38 functions as the Proton donor in the catalytic mechanism. Gln-62 contacts (R)-pantoate. Gln-62 contributes to the beta-alanine binding site. Position 148–151 (148–151 (GEKD)) interacts with ATP. (R)-pantoate is bound at residue Gln-154. Residues Val-177 and 185-188 (LSSR) each bind ATP.

The protein belongs to the pantothenate synthetase family. Homodimer.

The protein resides in the cytoplasm. The enzyme catalyses (R)-pantoate + beta-alanine + ATP = (R)-pantothenate + AMP + diphosphate + H(+). Its pathway is cofactor biosynthesis; (R)-pantothenate biosynthesis; (R)-pantothenate from (R)-pantoate and beta-alanine: step 1/1. Catalyzes the condensation of pantoate with beta-alanine in an ATP-dependent reaction via a pantoyl-adenylate intermediate. The polypeptide is Pantothenate synthetase (Cereibacter sphaeroides (strain ATCC 17023 / DSM 158 / JCM 6121 / CCUG 31486 / LMG 2827 / NBRC 12203 / NCIMB 8253 / ATH 2.4.1.) (Rhodobacter sphaeroides)).